Reading from the N-terminus, the 306-residue chain is Pyridoxal 5'-phosphate synthase subunit PdxS (306 aa).

Asp36 provides a ligand contact to D-ribose 5-phosphate. Lys93 (schiff-base intermediate with D-ribose 5-phosphate) is an active-site residue. Residue Gly165 participates in D-ribose 5-phosphate binding. Arg177 lines the D-glyceraldehyde 3-phosphate pocket. D-ribose 5-phosphate-binding positions include Gly226 and 247-248 (GS).

It belongs to the PdxS/SNZ family. As to quaternary structure, in the presence of PdxT, forms a dodecamer of heterodimers.

It carries out the reaction aldehydo-D-ribose 5-phosphate + D-glyceraldehyde 3-phosphate + L-glutamine = pyridoxal 5'-phosphate + L-glutamate + phosphate + 3 H2O + H(+). It functions in the pathway cofactor biosynthesis; pyridoxal 5'-phosphate biosynthesis. Catalyzes the formation of pyridoxal 5'-phosphate from ribose 5-phosphate (RBP), glyceraldehyde 3-phosphate (G3P) and ammonia. The ammonia is provided by the PdxT subunit. Can also use ribulose 5-phosphate and dihydroxyacetone phosphate as substrates, resulting from enzyme-catalyzed isomerization of RBP and G3P, respectively. In Nocardia farcinica (strain IFM 10152), this protein is Pyridoxal 5'-phosphate synthase subunit PdxS.